Consider the following 195-residue polypeptide: Probable GTP-binding protein EngB (195 aa).

An EngB-type G domain is found at 22–195; sequence GLPEIALAGR…WGAIKKMISR (174 aa). GTP contacts are provided by residues 30 to 37, 57 to 61, 75 to 78, 142 to 145, and 174 to 176; these read GRSNVGKS, GKTQT, DVPG, TKAD, and FSS. The Mg(2+) site is built by S37 and T59.

Belongs to the TRAFAC class TrmE-Era-EngA-EngB-Septin-like GTPase superfamily. EngB GTPase family. Mg(2+) is required as a cofactor.

In terms of biological role, necessary for normal cell division and for the maintenance of normal septation. This is Probable GTP-binding protein EngB from Bacillus velezensis (strain DSM 23117 / BGSC 10A6 / LMG 26770 / FZB42) (Bacillus amyloliquefaciens subsp. plantarum).